We begin with the raw amino-acid sequence, 310 residues long: Olfactory receptor 5AR1 (310 aa).

The Extracellular portion of the chain corresponds to M1 to F28. N5 carries an N-linked (GlcNAc...) asparagine glycan. Residues V29 to I49 form a helical membrane-spanning segment. Topologically, residues T50–P58 are cytoplasmic. A helical transmembrane segment spans residues M59–P79. Residues R80–Q100 lie on the Extracellular side of the membrane. An intrachain disulfide couples C97 to C189. Residues F101–Y120 traverse the membrane as a helical segment. Over G121 to Q139 the chain is Cytoplasmic. A helical transmembrane segment spans residues V140–T160. Residues T161–F205 are Extracellular-facing. A helical transmembrane segment spans residues I206–I226. The Cytoplasmic segment spans residues R227 to S239. A helical membrane pass occupies residues T240–L260. At R261–D271 the chain is on the extracellular side. Residues K272 to L292 traverse the membrane as a helical segment. Topologically, residues R293–Q310 are cytoplasmic.

This sequence belongs to the G-protein coupled receptor 1 family.

It is found in the cell membrane. In terms of biological role, odorant receptor. The sequence is that of Olfactory receptor 5AR1 from Homo sapiens (Human).